The chain runs to 746 residues: Histone-lysine N-methyltransferase EZH2 (746 aa).

Residues 1-340 (MGQTGKKSEK…AKEFAAALTA (340 aa)) are interaction with DNMT1, DNMT3A and DNMT3B. Position 21 is a phosphoserine; by PKB/AKT1 (S21). Residues 39 to 68 (KTMFSSNRQKILERTETLNQEWKQRRIQPV) form an interaction with EED region. S75 carries an O-linked (GlcNAc) serine glycan. S76 is subject to Phosphoserine. A disordered region spans residues 180–217 (QYNDDDDDDDGDDPDEREEKQKDLEDNRDDKETCPPRK). The span at 182-195 (NDDDDDDDGDDPDE) shows a compositional bias: acidic residues. Over residues 196-217 (REEKQKDLEDNRDDKETCPPRK) the composition is skewed to basic and acidic residues. Residues 329-522 (EGAKEFAAAL…SSNHVYNYQP (194 aa)) form an interaction with CDYL region. A Phosphothreonine modification is found at T339. Positions 340-426 (AERIKTPPKR…PIKMKPNIEP (87 aa)) are disordered. The residue at position 345 (T345) is a Phosphothreonine; by CDK1 and CDK2. The span at 345–357 (TPPKRPGGRRRGR) shows a compositional bias: basic residues. Residues S363 and S366 each carry the phosphoserine modification. T367 carries the phosphothreonine modification. Over residues 374-385 (ESKDTDSDREAG) the composition is skewed to basic and acidic residues. T487 bears the Phosphothreonine mark. Residues 503-605 (CRKIQLKKDG…SKNVSCKNCS (103 aa)) form the CXC domain. The region spanning 612–727 (KHLLLAPSDV…TGEELFFDYR (116 aa)) is the SET domain. K634 is covalently cross-linked (Glycyl lysine isopeptide (Lys-Gly) (interchain with G-Cter in SUMO2)).

It belongs to the class V-like SAM-binding methyltransferase superfamily. Histone-lysine methyltransferase family. EZ subfamily. As to quaternary structure, component of the PRC2/EED-EZH2 complex, which includes EED, EZH2, SUZ12, RBBP4 and RBBP7 and possibly AEBP2. The minimum components required for methyltransferase activity of the PRC2/EED-EZH2 complex are EED, EZH2 and SUZ12. The PRC2 complex may also interact with DNMT1, DNMT3A, DNMT3B and PHF1 via the EZH2 subunit and with SIRT1 via the SUZ12 subunit. Interacts with HDAC1 and HDAC2. Binds ATRX via the SET domain. Interacts with PRAME. Interacts with CDYL. Interacts with EED. Interacts with BMAL1. Interacts with CLOCK and CRY1. Interacts with DNMT3L; the interaction is direct. Interacts with EZHIP; the interaction blocks EZH2 methyltransferase activity. Interacts with ZNF263; recruited to the SIX3 promoter along with other proteins involved in chromatin modification and transcriptional corepression where it contributes to transcriptional repression. Interacts with ARMC12. Interacts with ZMYND8; the interaction is dependent on the presence of chromatin. Interacts with DDX18; this interaction inhibits the PRC2 complex. Post-translationally, phosphorylated by AKT1. Phosphorylation by AKT1 reduces methyltransferase activity. Phosphorylation at Thr-345 by CDK1 and CDK2 promotes maintenance of H3K27me3 levels at EZH2-target loci, thus leading to epigenetic gene silencing. In terms of processing, sumoylated. Glycosylated: O-GlcNAcylation at Ser-75 by OGT increases stability of EZH2 and facilitates the formation of H3K27me3 by the PRC2/EED-EZH2 complex. As to expression, present in actively dividing cells. Widely expressed in early embryos. In later embryogenesis, expression restricted to central and peripheral nervous system, liver and thymus. In adult, highest expression in spleen, testis and placenta. Lower levels in intestine, muscle and ovary and very low levels in brain and liver. No expression in heart, thyroid gland, lung and kidney.

Its subcellular location is the nucleus. It localises to the chromosome. The catalysed reaction is L-lysyl(27)-[histone H3] + 3 S-adenosyl-L-methionine = N(6),N(6),N(6)-trimethyl-L-lysyl(27)-[histone H3] + 3 S-adenosyl-L-homocysteine + 3 H(+). In terms of biological role, polycomb group (PcG) protein. Catalytic subunit of the PRC2/EED-EZH2 complex, which methylates (H3K9me) and 'Lys-27' (H3K27me) of histone H3, leading to transcriptional repression of the affected target gene. Able to mono-, di- and trimethylate 'Lys-27' of histone H3 to form H3K27me1, H3K27me2 and H3K27me3, respectively. Displays a preference for substrates with less methylation, loses activity when progressively more methyl groups are incorporated into H3K27, H3K27me0 &gt; H3K27me1 &gt; H3K27me2. Compared to EZH1-containing complexes, it is more abundant in embryonic stem cells and plays a major role in forming H3K27me3, which is required for embryonic stem cell identity and proper differentiation. The PRC2/EED-EZH2 complex may also serve as a recruiting platform for DNA methyltransferases, thereby linking two epigenetic repression systems. Genes repressed by the PRC2/EED-EZH2 complex include HOXA7, HOXB6 and HOXC8. EZH2 can also methylate non-histone proteins such as the transcription factor GATA4 and the nuclear receptor RORA. Regulates the circadian clock via histone methylation at the promoter of the circadian genes. Essential for the CRY1/2-mediated repression of the transcriptional activation of PER1/2 by the CLOCK-BMAL1 heterodimer; involved in the di and trimethylation of 'Lys-27' of histone H3 on PER1/2 promoters which is necessary for the CRY1/2 proteins to inhibit transcription. In Mus musculus (Mouse), this protein is Histone-lysine N-methyltransferase EZH2.